The primary structure comprises 195 residues: MLSWTVILTGIFMAYAVGSLAGGHFLSKILYNADVRQVGSGNAGTMNVLRNLGIAAGIMTFIWDTAKGFLVVTLGLKGGGAELGVLMALAAVAGHNWPLYWRFQGGKGLATSLGVALAVYPAAVPPGAALMGLLTFLTRNTDLATLLTFSALPIYFWWREGPGCYLAFGLGLAAIMLLRHGPLVISLFYNLKERR.

The next 5 membrane-spanning stretches (helical) occupy residues 6–26, 52–72, 74–94, 117–137, and 168–188; these read VILT…GHFL, LGIA…FLVV, LGLK…AVAG, LAVY…LTFL, and FGLG…ISLF.

This sequence belongs to the PlsY family. In terms of assembly, probably interacts with PlsX.

It localises to the cell membrane. The enzyme catalyses an acyl phosphate + sn-glycerol 3-phosphate = a 1-acyl-sn-glycero-3-phosphate + phosphate. It functions in the pathway lipid metabolism; phospholipid metabolism. Functionally, catalyzes the transfer of an acyl group from acyl-phosphate (acyl-PO(4)) to glycerol-3-phosphate (G3P) to form lysophosphatidic acid (LPA). This enzyme utilizes acyl-phosphate as fatty acyl donor, but not acyl-CoA or acyl-ACP. The polypeptide is Glycerol-3-phosphate acyltransferase 1 (Moorella thermoacetica (strain ATCC 39073 / JCM 9320)).